Here is a 345-residue protein sequence, read N- to C-terminus: N-acetyl-gamma-glutamyl-phosphate reductase (345 aa).

Residue C149 is part of the active site.

Belongs to the NAGSA dehydrogenase family. Type 1 subfamily.

The protein localises to the cytoplasm. The catalysed reaction is N-acetyl-L-glutamate 5-semialdehyde + phosphate + NADP(+) = N-acetyl-L-glutamyl 5-phosphate + NADPH + H(+). It participates in amino-acid biosynthesis; L-arginine biosynthesis; N(2)-acetyl-L-ornithine from L-glutamate: step 3/4. In terms of biological role, catalyzes the NADPH-dependent reduction of N-acetyl-5-glutamyl phosphate to yield N-acetyl-L-glutamate 5-semialdehyde. The chain is N-acetyl-gamma-glutamyl-phosphate reductase from Halalkalibacterium halodurans (strain ATCC BAA-125 / DSM 18197 / FERM 7344 / JCM 9153 / C-125) (Bacillus halodurans).